A 352-amino-acid polypeptide reads, in one-letter code: Protein YpbB (352 aa).

In terms of assembly, interacts with RecS and SSB (ssbA); the 6 C-terminal residues of SSB are required for interaction with YpbB.

The protein localises to the cytoplasm. The protein resides in the nucleoid. The sequence is that of Protein YpbB (ypbB) from Bacillus subtilis (strain 168).